Consider the following 631-residue polypeptide: tRNA uridine 5-carboxymethylaminomethyl modification enzyme MnmG (631 aa).

13–18 is a binding site for FAD; it reads GGGHAG. Position 273–287 (273–287) interacts with NAD(+); it reads GPRYCPSIEDKVNRF.

The protein belongs to the MnmG family. In terms of assembly, homodimer. Heterotetramer of two MnmE and two MnmG subunits. Requires FAD as cofactor.

It is found in the cytoplasm. NAD-binding protein involved in the addition of a carboxymethylaminomethyl (cmnm) group at the wobble position (U34) of certain tRNAs, forming tRNA-cmnm(5)s(2)U34. The protein is tRNA uridine 5-carboxymethylaminomethyl modification enzyme MnmG of Chromohalobacter salexigens (strain ATCC BAA-138 / DSM 3043 / CIP 106854 / NCIMB 13768 / 1H11).